A 109-amino-acid polypeptide reads, in one-letter code: Probable endoribonuclease MazF5 (109 aa).

The protein belongs to the PemK/MazF family. Forms a complex with cognate antitoxin MazE5.

Toxic component of a type II toxin-antitoxin (TA) system. Upon expression in M.smegmatis inhibits colony formation. Its toxic effect is neutralized by coexpression with cognate antitoxin MazE5. Probably an endoribonuclease. In Mycobacterium tuberculosis (strain ATCC 25618 / H37Rv), this protein is Probable endoribonuclease MazF5 (mazF5).